Reading from the N-terminus, the 103-residue chain is Small ribosomal subunit protein uS10 (103 aa).

The protein belongs to the universal ribosomal protein uS10 family. In terms of assembly, part of the 30S ribosomal subunit.

Its function is as follows. Involved in the binding of tRNA to the ribosomes. In Marinomonas sp. (strain MWYL1), this protein is Small ribosomal subunit protein uS10.